Consider the following 78-residue polypeptide: Ferredoxin (78 aa).

4Fe-4S ferredoxin-type domains follow at residues 2 to 29 (FVIT…HEGP) and 30 to 59 (DQYY…QEEF). [3Fe-4S] cluster-binding residues include Cys8 and Cys16. [4Fe-4S] cluster contacts are provided by Cys20, Cys39, Cys42, and Cys45. Cys49 provides a ligand contact to [3Fe-4S] cluster.

It depends on [3Fe-4S] cluster as a cofactor. [4Fe-4S] cluster serves as cofactor.

In terms of biological role, ferredoxins are iron-sulfur proteins that transfer electrons in a wide variety of metabolic reactions. This chain is Ferredoxin, found in Alicyclobacillus acidocaldarius subsp. acidocaldarius (Bacillus acidocaldarius).